Here is a 499-residue protein sequence, read N- to C-terminus: Serine carboxypeptidase 1 (499 aa).

The signal sequence occupies residues 1 to 30; it reads MARCRRRSGCTAGAALLLLLALALSGGGGA. 3 disulfides stabilise this stretch: Cys92-Cys388, Cys256-Cys268, and Cys291-Cys355. An N-linked (GlcNAc...) asparagine glycan is attached at Asn148. Ser188 is an active-site residue. N-linked (GlcNAc...) asparagine glycosylation is present at Asn262. Residues 297 to 351 constitute a propeptide, linker peptide; sequence IKEVNLQNSKLPQSFKDLGTTNKPFPVRTRMLGRAWPLRAPVKAGRVPSWQEVAS. N-linked (GlcNAc...) asparagine glycosylation is present at Asn407. Catalysis depends on residues Asp423 and His476. Positions 497 to 499 match the Microbody targeting signal motif; it reads SKL.

This sequence belongs to the peptidase S10 family. As to quaternary structure, carboxypeptidase I is a dimer, where each monomer is composed of two chains linked by disulfide bonds. The linker peptide is endoproteolytically excised during enzyme maturation.

The protein localises to the secreted. The enzyme catalyses Release of a C-terminal amino acid with broad specificity.. In terms of biological role, may be involved in the degradation of small peptides (2-5 residues) or in the degradation of storage proteins in the embryo. The chain is Serine carboxypeptidase 1 (CBP1) from Hordeum vulgare (Barley).